The chain runs to 279 residues: Tryptophan 2,3-dioxygenase (279 aa).

Residues 48–52 (FIVIH), Tyr-110, and Arg-114 each bind substrate. Heme is bound at residue His-237. Thr-251 is a substrate binding site.

The protein belongs to the tryptophan 2,3-dioxygenase family. In terms of assembly, homotetramer. Heme serves as cofactor.

It carries out the reaction L-tryptophan + O2 = N-formyl-L-kynurenine. It participates in amino-acid degradation; L-tryptophan degradation via kynurenine pathway; L-kynurenine from L-tryptophan: step 1/2. In terms of biological role, heme-dependent dioxygenase that catalyzes the oxidative cleavage of the L-tryptophan (L-Trp) pyrrole ring and converts L-tryptophan to N-formyl-L-kynurenine. Catalyzes the oxidative cleavage of the indole moiety. The polypeptide is Tryptophan 2,3-dioxygenase (Bacillus thuringiensis subsp. konkukian (strain 97-27)).